Here is a 1386-residue protein sequence, read N- to C-terminus: DNA-directed RNA polymerase subunit beta (1386 aa).

It belongs to the RNA polymerase beta chain family. As to quaternary structure, the RNAP catalytic core consists of 2 alpha, 1 beta, 1 beta' and 1 omega subunit. When a sigma factor is associated with the core the holoenzyme is formed, which can initiate transcription.

It catalyses the reaction RNA(n) + a ribonucleoside 5'-triphosphate = RNA(n+1) + diphosphate. In terms of biological role, DNA-dependent RNA polymerase catalyzes the transcription of DNA into RNA using the four ribonucleoside triphosphates as substrates. This is DNA-directed RNA polymerase subunit beta from Nitratiruptor sp. (strain SB155-2).